A 660-amino-acid polypeptide reads, in one-letter code: Macrolide export ATP-binding/permease protein MacB (660 aa).

The ABC transporter domain maps to 10 to 248 (LVLENIVRKF…TDSQALYGKQ (239 aa)). 46–53 (GASGSGKS) serves as a coordination point for ATP. 4 helical membrane passes run 285–305 (FLTMLGVIIGIGAIIAMVALG), 532–552 (ILTLLVSSIAAISLIVGGIGV), 593–613 (VIGGGLGILFGMSIGGLFLLF), and 625–645 (SIILSLTFSTLIGVCFGFSPA).

It belongs to the ABC transporter superfamily. Macrolide exporter (TC 3.A.1.122) family. Homodimer.

It localises to the cell inner membrane. Its function is as follows. Non-canonical ABC transporter that contains transmembrane domains (TMD), which form a pore in the inner membrane, and an ATP-binding domain (NBD), which is responsible for energy generation. Confers resistance against macrolides. The polypeptide is Macrolide export ATP-binding/permease protein MacB (Bartonella henselae (strain ATCC 49882 / DSM 28221 / CCUG 30454 / Houston 1) (Rochalimaea henselae)).